Reading from the N-terminus, the 252-residue chain is uncharacterized protein (252 aa).

Residues 106–140 are a coiled coil; the sequence is IQSLHARRDHLDNAVEQLKSQLSRLDSSVAILKSQ.

This is an uncharacterized protein from Caenorhabditis elegans.